We begin with the raw amino-acid sequence, 213 residues long: Ribosomal RNA small subunit methyltransferase G (213 aa).

S-adenosyl-L-methionine contacts are provided by residues Gly-75, Phe-80, 128–129, and Arg-144; that span reads IE.

Belongs to the methyltransferase superfamily. RNA methyltransferase RsmG family.

It localises to the cytoplasm. It carries out the reaction guanosine(527) in 16S rRNA + S-adenosyl-L-methionine = N(7)-methylguanosine(527) in 16S rRNA + S-adenosyl-L-homocysteine. Its function is as follows. Specifically methylates the N7 position of guanine in position 527 of 16S rRNA. This chain is Ribosomal RNA small subunit methyltransferase G, found in Brucella abortus (strain S19).